The sequence spans 155 residues: DNA-directed RNA polymerases I, II, and III subunit RPABC2 (155 aa).

Positions 1-19 (MSDYEEAFNDGNENFEDFD) are enriched in acidic residues. Positions 1–57 (MSDYEEAFNDGNENFEDFDVEHFSDEETYEEKPQFKDGETTDANGKTIVTGGNGPED) are disordered. A compositionally biased stretch (basic and acidic residues) spans 20-39 (VEHFSDEETYEEKPQFKDGE). Phosphoserine is present on S24. The leucine-zipper stretch occupies residues 111–132 (LEGETDPLRIAMKELAEKKIPL).

The protein belongs to the archaeal Rpo6/eukaryotic RPB6 RNA polymerase subunit family. Component of the RNA polymerase I (Pol I), RNA polymerase II (Pol II) and RNA polymerase III (Pol III) complexes. Component of the RNA polymerase I (Pol I) complex consisting of 14 subunits: RPA135, RPA190, RPC40, RPA14, RPB5, RPO26, RPA43, RPB8, RPA12, RPB10, RPC19, RPC10, RPA49 and RPA34. The complex is composed of a horseshoe-shaped core containing ten subunits (RPA135, RPA190, RPB5, RPO26, RPB8, RPB10, RPC10, RPA12, RPC19 and RPC40) where RPA135 and RPA190 form the DNA-binding cleft. Outside of the core, RPA14 and RPA43 form the stalk that mediates interactions with transcription initiation factors and newly synthesized RNA. Component of the RNA polymerase II (Pol II) complex consisting of 12 subunits: RPO21, RPB2, RPB3, RPB4, RPB5, RPO26, RPB7, RPB8, RPB9, RPB10 and RPC10. Component of the RNA polymerase III (Pol III) complex consisting of 17 subunits.

The protein localises to the cytoplasm. It localises to the nucleus. Functionally, DNA-dependent RNA polymerases catalyze the transcription of DNA into RNA using the four ribonucleoside triphosphates as substrates. Common component of RNA polymerases I, II and III which synthesize ribosomal RNA precursors, mRNA precursors and many functional non-coding RNAs, and small RNAs, such as 5S rRNA and tRNAs, respectively. Pol II is the central component of the basal RNA polymerase II transcription machinery. RNA polymerases are composed of mobile elements that move relative to each other. In Pol II, RPB6 is part of the clamp element and together with parts of RPB1 and RPB2 forms a pocket to which the RPB4-RPB7 subcomplex binds. This is DNA-directed RNA polymerases I, II, and III subunit RPABC2 (RPO26) from Saccharomyces cerevisiae (strain ATCC 204508 / S288c) (Baker's yeast).